The primary structure comprises 87 residues: Elongation factor Ts, chloroplastic (87 aa).

This sequence belongs to the EF-Ts family.

The protein localises to the plastid. The protein resides in the chloroplast. Its function is as follows. Associates with the EF-Tu.GDP complex and induces the exchange of GDP to GTP. It remains bound to the aminoacyl-tRNA.EF-Tu.GTP complex up to the GTP hydrolysis stage on the ribosome. The protein is Elongation factor Ts, chloroplastic (tsf) of Antithamnion sp. (Red alga).